The following is a 122-amino-acid chain: Large ribosomal subunit protein uL14c (122 aa).

This sequence belongs to the universal ribosomal protein uL14 family. Part of the 50S ribosomal subunit.

It localises to the plastid. The protein localises to the chloroplast. In terms of biological role, binds to 23S rRNA. The polypeptide is Large ribosomal subunit protein uL14c (Lotus japonicus (Lotus corniculatus var. japonicus)).